Reading from the N-terminus, the 899-residue chain is Plasma membrane ATPase (899 aa).

The interval 1–72 (MSAATEPTKE…TDPSYGLTSD (72 aa)) is disordered. Residues 1–96 (MSAATEPTKE…SEETENLFVK (96 aa)) lie on the Cytoplasmic side of the membrane. Residues 17-29 (DSDDEDEDIDQLI) are compositionally biased toward acidic residues. A helical membrane pass occupies residues 97 to 117 (FLMFFIGPIQFVMEAAAILAA). Topologically, residues 118–121 (GLED) are extracellular. Residues 122–141 (WVDFGVICGLLFLNAAVGFI) form a helical membrane-spanning segment. Residues 142–272 (QEYQAGSIVD…GSGHFTEVLN (131 aa)) lie on the Cytoplasmic side of the membrane. A helical transmembrane segment spans residues 273 to 294 (GIGTILLILVIVTLLLVWVASF). The Extracellular segment spans residues 295-305 (YRTNKIVRILR). A helical transmembrane segment spans residues 306-328 (YTLAITIVGVPVGLPAVVTTTMA). Over 329 to 700 (VGAAYLAKKQ…IAILNRSLNI (372 aa)) the chain is Cytoplasmic. D359 acts as the 4-aspartylphosphate intermediate in catalysis. D615 and D619 together coordinate Mg(2+). A helical membrane pass occupies residues 701–719 (DLVVFIAIFADVATLAIAY). Over 720–735 (DNAPYSPKPVKWNLRR) the chain is Extracellular. The helical transmembrane segment at 736-755 (LWGMSVILGIILAIGTWITL) threads the bilayer. At 756–805 (TTMFVPKGGIIQNFGSIDGVLFLQISLTENWLIFITRAAGPFWSSIPSWQ) the chain is on the cytoplasmic side. The helical transmembrane segment at 806–826 (LSGAVLIVDIIATMFCLFGWW) threads the bilayer. Residues 827 to 838 (SQNWNDIVTVVR) lie on the Extracellular side of the membrane. The chain crosses the membrane as a helical span at residues 839–855 (VWIFSFGVFCVMGGAYY). Over 856 to 899 (MMSESEAFDRFMNGKSRRDKPSGRSVEDFLMAMQRVSTQHEKEN) the chain is Cytoplasmic.

It belongs to the cation transport ATPase (P-type) (TC 3.A.3) family. Type IIIA subfamily.

It localises to the cell membrane. It catalyses the reaction ATP + H2O + H(+)(in) = ADP + phosphate + 2 H(+)(out). Activated by high pH or also by potassium ions when the medium pH is low. In terms of biological role, the plasma membrane ATPase of plants and fungi is a hydrogen ion pump. The proton gradient it generates drives the active transport of nutrients by H(+)-symport. The resulting external acidification and/or internal alkinization may mediate growth responses. The protein is Plasma membrane ATPase (PMA1) of Kluyveromyces lactis (strain ATCC 8585 / CBS 2359 / DSM 70799 / NBRC 1267 / NRRL Y-1140 / WM37) (Yeast).